Here is a 502-residue protein sequence, read N- to C-terminus: Glycerol kinase (502 aa).

ADP is bound at residue T14. 3 residues coordinate ATP: T14, T15, and S16. A sn-glycerol 3-phosphate-binding site is contributed by T14. R18 serves as a coordination point for ADP. R84, E85, and Y136 together coordinate sn-glycerol 3-phosphate. 3 residues coordinate glycerol: R84, E85, and Y136. H232 is modified (phosphohistidine; by HPr). D246 contributes to the sn-glycerol 3-phosphate binding site. 2 residues coordinate glycerol: D246 and Q247. ADP contacts are provided by T268 and G311. Residues T268, G311, Q315, and G412 each coordinate ATP. ADP-binding residues include G412 and N416.

The protein belongs to the FGGY kinase family. As to quaternary structure, homotetramer and homodimer (in equilibrium). Post-translationally, the phosphoenolpyruvate-dependent sugar phosphotransferase system (PTS), including enzyme I, and histidine-containing protein (HPr) are required for the phosphorylation, which leads to the activation of the enzyme.

The catalysed reaction is glycerol + ATP = sn-glycerol 3-phosphate + ADP + H(+). It participates in polyol metabolism; glycerol degradation via glycerol kinase pathway; sn-glycerol 3-phosphate from glycerol: step 1/1. Activated by phosphorylation and inhibited by fructose 1,6-bisphosphate (FBP). Key enzyme in the regulation of glycerol uptake and metabolism. Catalyzes the phosphorylation of glycerol to yield sn-glycerol 3-phosphate. The protein is Glycerol kinase of Streptococcus pneumoniae (strain P1031).